We begin with the raw amino-acid sequence, 478 residues long: 3-isopropylmalate dehydratase large subunit (478 aa).

The [4Fe-4S] cluster site is built by Cys-355, Cys-415, and Cys-418.

It belongs to the aconitase/IPM isomerase family. LeuC type 1 subfamily. As to quaternary structure, heterodimer of LeuC and LeuD. [4Fe-4S] cluster is required as a cofactor.

It catalyses the reaction (2R,3S)-3-isopropylmalate = (2S)-2-isopropylmalate. Its pathway is amino-acid biosynthesis; L-leucine biosynthesis; L-leucine from 3-methyl-2-oxobutanoate: step 2/4. In terms of biological role, catalyzes the isomerization between 2-isopropylmalate and 3-isopropylmalate, via the formation of 2-isopropylmaleate. This is 3-isopropylmalate dehydratase large subunit from Paracoccus denitrificans (strain Pd 1222).